The sequence spans 516 residues: Glutamyl-tRNA(Gln) amidotransferase subunit B, mitochondrial (516 aa).

This sequence belongs to the GatB/GatE family. GatB subfamily. As to quaternary structure, subunit of the heterotrimeric GatCAB amidotransferase (AdT) complex, composed of A, B and C subunits.

It is found in the mitochondrion. The enzyme catalyses L-glutamyl-tRNA(Gln) + L-glutamine + ATP + H2O = L-glutaminyl-tRNA(Gln) + L-glutamate + ADP + phosphate + H(+). In terms of biological role, allows the formation of correctly charged Gln-tRNA(Gln) through the transamidation of misacylated Glu-tRNA(Gln) in the mitochondria. The reaction takes place in the presence of glutamine and ATP through an activated gamma-phospho-Glu-tRNA(Gln). The chain is Glutamyl-tRNA(Gln) amidotransferase subunit B, mitochondrial from Drosophila melanogaster (Fruit fly).